The sequence spans 287 residues: Glycine--tRNA ligase alpha subunit (287 aa).

It belongs to the class-II aminoacyl-tRNA synthetase family. As to quaternary structure, tetramer of two alpha and two beta subunits.

It localises to the cytoplasm. It catalyses the reaction tRNA(Gly) + glycine + ATP = glycyl-tRNA(Gly) + AMP + diphosphate. This chain is Glycine--tRNA ligase alpha subunit, found in Campylobacter curvus (strain 525.92).